Consider the following 97-residue polypeptide: Kunitz-type trypsin inhibitor 1 (97 aa).

This sequence belongs to the protease inhibitor I3 (leguminous Kunitz-type inhibitor) family.

Its function is as follows. Exhibits Kunitz trypsin protease inhibitor activity. This chain is Kunitz-type trypsin inhibitor 1, found in Selenicereus costaricensis (Red-fleshed dragon fruit).